Reading from the N-terminus, the 307-residue chain is N-acetylmuramic acid 6-phosphate etherase (307 aa).

An SIS domain is found at 59 to 222; sequence TTKALSQGGK…STGVMVRLGK (164 aa). The active-site Proton donor is the glutamate 87. Glutamate 118 is a catalytic residue.

It belongs to the GCKR-like family. MurNAc-6-P etherase subfamily. In terms of assembly, homodimer.

It carries out the reaction N-acetyl-D-muramate 6-phosphate + H2O = N-acetyl-D-glucosamine 6-phosphate + (R)-lactate. Its pathway is amino-sugar metabolism; N-acetylmuramate degradation. In terms of biological role, specifically catalyzes the cleavage of the D-lactyl ether substituent of MurNAc 6-phosphate, producing GlcNAc 6-phosphate and D-lactate. This chain is N-acetylmuramic acid 6-phosphate etherase, found in Trichodesmium erythraeum (strain IMS101).